Here is a 438-residue protein sequence, read N- to C-terminus: Transposon Ty2-LR2 Gag polyprotein (438 aa).

3 stretches are compositionally biased toward polar residues: residues 1 to 11, 19 to 39, and 49 to 60; these read MESQQLHQNPH, ASVT…SASN, and KVNSQEETTPGT. Disordered stretches follow at residues 1-88, 364-397, and 418-438; these read MESQ…YQQH, KNVS…AKAH, and VSSQ…TERI. The tract at residues 295 to 397 is RNA-binding; that stretch reads ENNINVSDRL…SSKPRAAKAH (103 aa). Low complexity predominate over residues 369 to 381; the sequence is TSPNTTNTKVTTR.

In terms of assembly, homotrimer.

Its subcellular location is the cytoplasm. Its function is as follows. Capsid protein (CA) is the structural component of the virus-like particle (VLP), forming the shell that encapsulates the retrotransposons dimeric RNA genome. The particles are assembled from trimer-clustered units and there are holes in the capsid shells that allow for the diffusion of macromolecules. CA also has nucleocapsid-like chaperone activity, promoting primer tRNA(i)-Met annealing to the multipartite primer-binding site (PBS), dimerization of Ty2 RNA and initiation of reverse transcription. The chain is Transposon Ty2-LR2 Gag polyprotein (TY2A-LR2) from Saccharomyces cerevisiae (strain ATCC 204508 / S288c) (Baker's yeast).